Here is a 343-residue protein sequence, read N- to C-terminus: Annexin A1 isoform p37 (343 aa).

Gln-19 participates in a covalent cross-link: Isoglutamyl lysine isopeptide (Gln-Lys) (interchain with K-?). Tyr-21 carries the phosphotyrosine; by EGFR; in vitro modification. Ser-24 carries the post-translational modification Phosphoserine; by PKC; in vitro. Annexin repeat units follow at residues 38-109, 110-181, 193-265, and 269-340; these read FDPS…ALLK, TPAQ…VLAK, DLAD…ALVK, and SKPA…ALCG.

This sequence belongs to the annexin family. Phosphorylated by protein kinase C and epidermal growth factor receptor/kinase. In terms of processing, the N-terminus is blocked.

It is found in the nucleus. The protein localises to the cytoplasm. Its subcellular location is the cell projection. The protein resides in the cilium. It localises to the basolateral cell membrane. In terms of biological role, calcium/phospholipid-binding protein which promotes membrane fusion and is involved in exocytosis. This protein regulates phospholipase A2 activity. It seems to bind from two to four calcium ions with high affinity. In Columba livia (Rock dove), this protein is Annexin A1 isoform p37 (CP37).